Here is a 246-residue protein sequence, read N- to C-terminus: 3'(2'),5'-bisphosphate nucleotidase CysQ (246 aa).

The Mg(2+) site is built by Glu64, Asp83, Leu85, Asp86, and Asp205. Residue Glu64 coordinates substrate. Substrate contacts are provided by residues 85 to 88 (LDGT) and Asp205.

The protein belongs to the inositol monophosphatase superfamily. CysQ family. It depends on Mg(2+) as a cofactor.

It is found in the cell inner membrane. The enzyme catalyses adenosine 3',5'-bisphosphate + H2O = AMP + phosphate. Converts adenosine-3',5'-bisphosphate (PAP) to AMP. This chain is 3'(2'),5'-bisphosphate nucleotidase CysQ, found in Shigella flexneri.